The following is a 407-amino-acid chain: Putative F-box protein At2g16220 (407 aa).

The F-box domain maps to Met-1–Leu-45. A disordered region spans residues Pro-385–Ile-407. Positions Glu-391–Ile-407 are enriched in acidic residues.

This is Putative F-box protein At2g16220 from Arabidopsis thaliana (Mouse-ear cress).